The sequence spans 92 residues: UPF0213 protein MGAS9429_Spy1198 (92 aa).

A GIY-YIG domain is found at 4-80 (KKAYMYVLEC…KRKTRSQKLA (77 aa)).

The protein belongs to the UPF0213 family.

The sequence is that of UPF0213 protein MGAS9429_Spy1198 from Streptococcus pyogenes serotype M12 (strain MGAS9429).